The primary structure comprises 191 residues: CASP-like protein 1D1 (191 aa).

Over 1–22 the chain is Cytoplasmic; it reads MTSTSKDTPESGYAVPPPNLFG. The chain crosses the membrane as a helical span at residues 23–43; it reads VDFGLRLLLLASAVSALVVLV. Residues 44 to 73 lie on the Extracellular side of the membrane; that stretch reads TSKQTESIPTSLPPPFPAFISRDAKFQHSP. The chain crosses the membrane as a helical span at residues 74–94; sequence AFIYLLVALSVTCFYSIITMV. Topologically, residues 95-118 are cytoplasmic; sequence ASFAAITSPSSSPRMLFHLVLSDA. A helical membrane pass occupies residues 119 to 139; the sequence is VMAGVMASAAGTAGSVAYLGL. Over 140 to 160 the chain is Extracellular; sequence KGNSHVNWNKVCNVYDKFCRH. Residues 161-181 form a helical membrane-spanning segment; sequence VGSSAAVSLVASVLLVSLVVL. Residues 182–191 lie on the Cytoplasmic side of the membrane; the sequence is SSYSLYRRCR.

It belongs to the Casparian strip membrane proteins (CASP) family. As to quaternary structure, homodimer and heterodimers.

It localises to the cell membrane. The chain is CASP-like protein 1D1 from Musa acuminata (Banana).